The primary structure comprises 438 residues: Serine hydroxymethyltransferase (438 aa).

Residues Leu-133 and 137-139 (GHL) each bind (6S)-5,6,7,8-tetrahydrofolate. Lys-242 bears the N6-(pyridoxal phosphate)lysine mark.

Belongs to the SHMT family. As to quaternary structure, homodimer. The cofactor is pyridoxal 5'-phosphate.

It is found in the cytoplasm. It catalyses the reaction (6R)-5,10-methylene-5,6,7,8-tetrahydrofolate + glycine + H2O = (6S)-5,6,7,8-tetrahydrofolate + L-serine. The protein operates within one-carbon metabolism; tetrahydrofolate interconversion. It functions in the pathway amino-acid biosynthesis; glycine biosynthesis; glycine from L-serine: step 1/1. Functionally, catalyzes the reversible interconversion of serine and glycine with tetrahydrofolate (THF) serving as the one-carbon carrier. This reaction serves as the major source of one-carbon groups required for the biosynthesis of purines, thymidylate, methionine, and other important biomolecules. Also exhibits THF-independent aldolase activity toward beta-hydroxyamino acids, producing glycine and aldehydes, via a retro-aldol mechanism. The sequence is that of Serine hydroxymethyltransferase from Brucella abortus (strain S19).